The primary structure comprises 196 residues: Mpv17-like protein (196 aa).

The Cytoplasmic portion of the chain corresponds to 1–16 (MAGWWPALSRAARRHP). The targeting to peroxisomes stretch occupies residues 16–55 (PWPTNVLLYGSLVSAGDALQQRLQGREANWRQTRRVATLV). The helical transmembrane segment at 17–34 (WPTNVLLYGSLVSAGDAL) threads the bilayer. Over 35-50 (QQRLQGREANWRQTRR) the chain is Lumenal. Residues 51–67 (VATLVVTFHANFNYVWL) traverse the membrane as a helical segment. At 68 to 90 (RLLERALPGRAPHALLAKLLCDQ) the chain is on the cytoplasmic side. Residues 91–108 (VVGAPIAVSAFYVGMSIL) traverse the membrane as a helical segment. The Lumenal segment spans residues 109–150 (QGKDDIFLDLKQKFWNTYLSGLMYWPFVQLTNFSLVPVQWRT). Residues 151–167 (AYAGVCGFLWATFICFS) traverse the membrane as a helical segment. At 168-196 (QQSGDGTFKSAFTILYTKGTSATEGYPKK) the chain is on the cytoplasmic side.

It belongs to the peroxisomal membrane protein PXMP2/4 family. In terms of tissue distribution, isoform 1 is detected in the kidney (at protein level). Isoform 1 and isoform 2 are expressed in the kidney, heart, liver, lung, pancreas and skeletal muscle.

Its subcellular location is the peroxisome membrane. Functionally, participates in reactive oxygen species metabolism by up- or down-regulation of the genes of antioxidant enzymes. Protective against the mitochondrial apoptotic cascade. This Homo sapiens (Human) protein is Mpv17-like protein (MPV17L).